Here is an 82-residue protein sequence, read N- to C-terminus: Large ribosomal subunit protein bL31B (82 aa).

The protein belongs to the bacterial ribosomal protein bL31 family. Type B subfamily. As to quaternary structure, part of the 50S ribosomal subunit.

This chain is Large ribosomal subunit protein bL31B, found in Amoebophilus asiaticus (strain 5a2).